Reading from the N-terminus, the 198-residue chain is Probable GTP-binding protein EngB (198 aa).

The EngB-type G domain maps to 21 to 195 (NFSEVAFLGR…EDIIINQTLG (175 aa)). GTP contacts are provided by residues 29–36 (GRSNVGKS), 56–60 (GKTQL), 81–84 (DLPG), 151–154 (TKCD), and 174–176 (VSN). S36 and T58 together coordinate Mg(2+).

It belongs to the TRAFAC class TrmE-Era-EngA-EngB-Septin-like GTPase superfamily. EngB GTPase family. The cofactor is Mg(2+).

In terms of biological role, necessary for normal cell division and for the maintenance of normal septation. This Campylobacter jejuni subsp. jejuni serotype O:2 (strain ATCC 700819 / NCTC 11168) protein is Probable GTP-binding protein EngB.